The primary structure comprises 861 residues: DNA mismatch repair protein MutS (861 aa).

616–623 (GPNMGGKS) serves as a coordination point for ATP.

Belongs to the DNA mismatch repair MutS family.

Functionally, this protein is involved in the repair of mismatches in DNA. It is possible that it carries out the mismatch recognition step. This protein has a weak ATPase activity. In Haemophilus influenzae (strain 86-028NP), this protein is DNA mismatch repair protein MutS.